A 337-amino-acid chain; its full sequence is Transcription factor bHLH121 (337 aa).

The 51-residue stretch at 58 to 108 (ARKSQKAGREKLRREKLNEHFVELGNVLDPERPKNDKATILTDTVQLLKEL) folds into the bHLH domain. The disordered stretch occupies residues 235-337 (VHIPQNPGNR…AGGQKPDDAK (103 aa)). Composition is skewed to basic and acidic residues over residues 244 to 263 (RSRE…KAED) and 280 to 291 (SDKDTLQRPEKT). Low complexity predominate over residues 297-317 (NNNNNSIEESSHSSKCSSSPS).

In terms of assembly, homodimer. In terms of tissue distribution, expressed constitutively in roots, leaves, stems, and flowers.

It localises to the nucleus. In Arabidopsis thaliana (Mouse-ear cress), this protein is Transcription factor bHLH121 (BHLH121).